A 434-amino-acid polypeptide reads, in one-letter code: ATP-dependent protease ATPase subunit HslU (434 aa).

ATP-binding positions include Val18, 60 to 65 (GVGKTE), Asp247, Glu312, and Arg384.

This sequence belongs to the ClpX chaperone family. HslU subfamily. As to quaternary structure, a double ring-shaped homohexamer of HslV is capped on each side by a ring-shaped HslU homohexamer. The assembly of the HslU/HslV complex is dependent on binding of ATP.

It localises to the cytoplasm. Functionally, ATPase subunit of a proteasome-like degradation complex; this subunit has chaperone activity. The binding of ATP and its subsequent hydrolysis by HslU are essential for unfolding of protein substrates subsequently hydrolyzed by HslV. HslU recognizes the N-terminal part of its protein substrates and unfolds these before they are guided to HslV for hydrolysis. The chain is ATP-dependent protease ATPase subunit HslU from Phenylobacterium zucineum (strain HLK1).